Consider the following 331-residue polypeptide: 6-phosphogluconolactonase (331 aa).

Lys287 is modified (N6-acetyllysine).

Belongs to the cycloisomerase 2 family.

It carries out the reaction 6-phospho-D-glucono-1,5-lactone + H2O = 6-phospho-D-gluconate + H(+). The protein operates within carbohydrate degradation; pentose phosphate pathway; D-ribulose 5-phosphate from D-glucose 6-phosphate (oxidative stage): step 2/3. Functionally, catalyzes the hydrolysis of 6-phosphogluconolactone to 6-phosphogluconate. The polypeptide is 6-phosphogluconolactonase (Escherichia coli (strain SMS-3-5 / SECEC)).